We begin with the raw amino-acid sequence, 118 residues long: Ribonuclease P protein component (118 aa).

The protein belongs to the RnpA family. As to quaternary structure, consists of a catalytic RNA component (M1 or rnpB) and a protein subunit.

It catalyses the reaction Endonucleolytic cleavage of RNA, removing 5'-extranucleotides from tRNA precursor.. RNaseP catalyzes the removal of the 5'-leader sequence from pre-tRNA to produce the mature 5'-terminus. It can also cleave other RNA substrates such as 4.5S RNA. The protein component plays an auxiliary but essential role in vivo by binding to the 5'-leader sequence and broadening the substrate specificity of the ribozyme. The sequence is that of Ribonuclease P protein component from Shewanella amazonensis (strain ATCC BAA-1098 / SB2B).